Here is a 973-residue protein sequence, read N- to C-terminus: DENN domain-containing protein C297.05 (973 aa).

The segment covering 69 to 79 (AHHNTTGSNSV) has biased composition (polar residues). Positions 69 to 136 (AHHNTTGSNS…YHSRKPYSEP (68 aa)) are disordered. A phosphoserine mark is found at Ser-134 and Ser-318. The region spanning 169-427 (ALPLFAATHP…NICCDVPLPP (259 aa)) is the uDENN domain. The cDENN domain occupies 449–586 (VNEIPGWNDV…LRSKLQAHLK (138 aa)). Residues 588 to 919 (AAPLHDKFYV…DRCELDLNDP (332 aa)) enclose the dDENN domain. A disordered region spans residues 693 to 713 (RNFSSPPFTRPASPSSSKFRF). Position 726 is a phosphoserine (Ser-726). The interval 729–750 (SPYSVPELRSSESNQNKAGSIN) is disordered. The span at 739-750 (SESNQNKAGSIN) shows a compositional bias: polar residues.

The protein localises to the cytoplasm. Its subcellular location is the nucleus. The sequence is that of DENN domain-containing protein C297.05 from Schizosaccharomyces pombe (strain 972 / ATCC 24843) (Fission yeast).